Reading from the N-terminus, the 3530-residue chain is Unconventional myosin-XV (3530 aa).

Disordered stretches follow at residues 1 to 46 (MAKE…RTPK), 615 to 710 (AGMD…PAHV), and 730 to 1057 (EVPP…QKTL). Pro residues predominate over residues 663 to 681 (PPVPPRPPSSGPPPAPPLS). 3 stretches are compositionally biased toward low complexity: residues 682 to 693 (PALSGLPRPASP), 753 to 763 (AAFGFPGASPR), and 823 to 835 (SPAPRRAAGRLGP). Positions 836 to 850 (PGSPLPGSPRPPSPP) are enriched in pro residues. Residues 859–869 (RSSLNLPSRLP) show a composition bias toward low complexity. Basic and acidic residues predominate over residues 903–913 (PLEHRESPREP). Positions 1027–1038 (TKPPTPAPPKDV) are enriched in pro residues. A Myosin motor domain is found at 1222–1899 (DGVEDMTQLE…LYQLLESMRE (678 aa)). Residue 1315-1322 (GESGSGKT) participates in ATP binding. Positions 1323 to 1350 (EATKLILRYLAAMNQKREVMQQIKILEA) form a coiled coil. Positions 1792-1799 (FMRCLKPN) are actin-binding. Positions 1888 to 2029 (EHLYQLLESM…AQVPQVAPVR (142 aa)) are neck or regulatory domain. IQ domains lie at 1902–1924 (LNLAALTLQRCLRGFFIKRRFRS), 1925–1954 (LRHKIILLQSRARGYLARQRYQQMRRSLVK), and 1955–1976 (FRSLVHAYVSRRRYLKLRAEWR). A tail region spans residues 2030–3530 (TPRLQAEPRV…TLPPSEITLL (1501 aa)). Positions 2065–2217 (MLTVPLRTPL…PTQLEWTATY (153 aa)) constitute a MyTH4 1 domain. 4 disordered regions span residues 2311–2381 (AASR…GEPA), 2414–2446 (YRMKGGGQPGGGSSSGTEDTPRRPPEPKPIPGL), 2490–2509 (AEKPPAPEAQPTSVGTGPPA), and 2644–2665 (TSAPRPSMAPTSALPSRSLEPP). The segment covering 2349–2371 (GYSSHNQDGTNGETEAQRGTATH) has biased composition (polar residues). Residues 2417–2427 (KGGGQPGGGSS) show a composition bias toward gly residues. One can recognise an SH3 domain in the interval 2867 to 2953 (KDSDYVVAVR…PSELVQPAAA (87 aa)). The region spanning 3050-3204 (FTKTPLQESL…PSSIELRAML (155 aa)) is the MyTH4 2 domain. In terms of domain architecture, FERM spans 3209–3530 (SKRQLFLLPG…TLPPSEITLL (322 aa)).

It belongs to the TRAFAC class myosin-kinesin ATPase superfamily. Myosin family. Interacts with the third PDZ domain of WHRN which is necessary for localization of WHRN to stereocilium tips. Interacts with EPS8. Interacts with FASLG. Highly expressed in pituitary. Also expressed at lower levels in adult brain, kidney, liver, lung, pancreas, placenta and skeletal muscle. Not expressed in brain. In the pituitary, highly expressed in anterior gland cells.

The protein localises to the cell projection. It localises to the stereocilium. The protein resides in the cytoplasm. Its subcellular location is the cytoskeleton. Its function is as follows. Myosins are actin-based motor molecules with ATPase activity. Unconventional myosins serve in intracellular movements. Their highly divergent tails are presumed to bind to membranous compartments, which would be moved relative to actin filaments. Required for the arrangement of stereocilia in mature hair bundles. This Homo sapiens (Human) protein is Unconventional myosin-XV (MYO15A).